The chain runs to 360 residues: Protein-glutamate methylesterase/protein-glutamine glutaminase 3 (360 aa).

In terms of domain architecture, Response regulatory spans 14–131; sequence RVLVIDDSAT…AEGVQAYAEE (118 aa). Position 65 is a 4-aspartylphosphate (Asp-65). The CheB-type methylesterase domain maps to 169–360; that stretch reads AGKDGRVVAV…AGKLMELDGA (192 aa). Catalysis depends on residues Ser-181, His-207, and Asp-303.

Belongs to the CheB family. Phosphorylated by CheA. Phosphorylation of the N-terminal regulatory domain activates the methylesterase activity.

It localises to the cytoplasm. The catalysed reaction is [protein]-L-glutamate 5-O-methyl ester + H2O = L-glutamyl-[protein] + methanol + H(+). It carries out the reaction L-glutaminyl-[protein] + H2O = L-glutamyl-[protein] + NH4(+). Involved in chemotaxis. Part of a chemotaxis signal transduction system that modulates chemotaxis in response to various stimuli. Catalyzes the demethylation of specific methylglutamate residues introduced into the chemoreceptors (methyl-accepting chemotaxis proteins or MCP) by CheR. Also mediates the irreversible deamidation of specific glutamine residues to glutamic acid. This chain is Protein-glutamate methylesterase/protein-glutamine glutaminase 3, found in Burkholderia thailandensis (strain ATCC 700388 / DSM 13276 / CCUG 48851 / CIP 106301 / E264).